The chain runs to 215 residues: Urease accessory protein UreG 2 (215 aa).

A GTP-binding site is contributed by G11–T18.

Belongs to the SIMIBI class G3E GTPase family. UreG subfamily. As to quaternary structure, homodimer. UreD, UreF and UreG form a complex that acts as a GTP-hydrolysis-dependent molecular chaperone, activating the urease apoprotein by helping to assemble the nickel containing metallocenter of UreC. The UreE protein probably delivers the nickel.

The protein localises to the cytoplasm. In terms of biological role, facilitates the functional incorporation of the urease nickel metallocenter. This process requires GTP hydrolysis, probably effectuated by UreG. This chain is Urease accessory protein UreG 2, found in Methylorubrum extorquens (strain PA1) (Methylobacterium extorquens).